The sequence spans 371 residues: Cytochrome b (371 aa).

The next 4 helical transmembrane spans lie at 25 to 45 (FGSM…FLAV), 69 to 90 (WMMQ…YIHI), 105 to 125 (WMSG…GYVL), and 170 to 190 (FFAL…LHVI). The heme b site is built by His-75 and His-89. Residues His-174 and His-188 each coordinate heme b. His-193 contributes to the a ubiquinone binding site. 4 consecutive transmembrane segments (helical) span residues 218-238 (HKDL…VSFF), 280-300 (LGGA…PFTH), 312-332 (LSQL…WAAT), and 339-358 (FITI…LSIP).

Belongs to the cytochrome b family. In terms of assembly, the cytochrome bc1 complex contains 3 respiratory subunits (MT-CYB, CYC1 and UQCRFS1), 2 core proteins (UQCRC1 and UQCRC2) and probably 6 low-molecular weight proteins. Heme b is required as a cofactor.

The protein resides in the mitochondrion inner membrane. Component of the ubiquinol-cytochrome c reductase complex (complex III or cytochrome b-c1 complex) that is part of the mitochondrial respiratory chain. The b-c1 complex mediates electron transfer from ubiquinol to cytochrome c. Contributes to the generation of a proton gradient across the mitochondrial membrane that is then used for ATP synthesis. In Liasis mackloti savuensis (Savu python), this protein is Cytochrome b (MT-CYB).